We begin with the raw amino-acid sequence, 73 residues long: DNA-directed RNA polymerase subunit omega (73 aa).

This sequence belongs to the RNA polymerase subunit omega family. The RNAP catalytic core consists of 2 alpha, 1 beta, 1 beta' and 1 omega subunit. When a sigma factor is associated with the core the holoenzyme is formed, which can initiate transcription.

The enzyme catalyses RNA(n) + a ribonucleoside 5'-triphosphate = RNA(n+1) + diphosphate. Functionally, promotes RNA polymerase assembly. Latches the N- and C-terminal regions of the beta' subunit thereby facilitating its interaction with the beta and alpha subunits. This chain is DNA-directed RNA polymerase subunit omega, found in Maridesulfovibrio salexigens (strain ATCC 14822 / DSM 2638 / NCIMB 8403 / VKM B-1763) (Desulfovibrio salexigens).